A 240-amino-acid chain; its full sequence is Protein unc-119 homolog A (240 aa).

Over residues 1 to 12 (MKVKKGGGGAGT) the composition is skewed to gly residues. A disordered region spans residues 1-61 (MKVKKGGGGA…GPLQRKQRIG (61 aa)). Residues 13 to 23 (GAEPASGAPGP) are compositionally biased toward low complexity. 3 positions are modified to phosphoserine; by CK2: Ser-37, Ser-39, and Ser-41. Tyr-131 is a binding site for tetradecanoate.

It belongs to the PDE6D/unc-119 family. In terms of assembly, interacts with CABP4; in the absence of calcium. May interact with GTP-bound ARL1. Interacts with ARL2 and ARL3 (GTP-bound forms); this promotes the release of myristoylated cargo proteins. Found in a complex with ARL3, RP2 and UNC119; RP2 induces hydrolysis of GTP ARL3 in the complex, leading to the release of UNC119. Interacts with NPHP3 (when myristoylated). Interacts with CYS1 (when myristoylated). Interacts with MACIR; interaction only takes place when UNC119 is not liganded with myristoylated proteins. Interacts with LCK; this interaction plays a crucial role in activation of LCK. Interacts with FYN. Interacts with RAB11A; in a cell cycle-dependent manner. Interacts with LYN (via SH2 and SH3 domains); leading to LYN activation. Interacts with DNM1; leading to a decrease of DNM1 GTPase activity. Found in a complex with ABL1, ABL2, CRK and UNC119; leading to the inhibition of CRK phosphorylation by ABL kinases. Interacts with CD44. Interacts with KLHL18 (via kelch repeats). Interacts with PPP3CA, PPP3CB and PPP3CC. Interacts with USP48; this interaction promotes UNC119 stability. Phosphorylation suppresses its interaction with KLHL18 and down-regulates its KLHL18-mediated degradation. Phosphorylated more under light conditions than dark conditions. Dephosphorylated by calcineurin.

It is found in the cytoplasm. The protein localises to the cytoskeleton. Its subcellular location is the microtubule organizing center. The protein resides in the centrosome. It localises to the spindle. It is found in the spindle pole. Functionally, involved in synaptic functions in photoreceptor cells, the signal transduction in immune cells as a Src family kinase activator, endosome recycling, the uptake of bacteria and endocytosis, protein trafficking in sensory neurons and as lipid-binding chaperone with specificity for a diverse subset of myristoylated proteins. Specifically binds the myristoyl moiety of a subset of N-terminally myristoylated proteins and is required for their localization. Binds myristoylated GNAT1 and is required for G-protein localization and trafficking in sensory neurons. Probably plays a role in trafficking proteins in photoreceptor cells. Plays important roles in mediating Src family kinase signals for the completion of cytokinesis via RAB11A. This is Protein unc-119 homolog A (UNC119) from Canis lupus familiaris (Dog).